The following is a 209-amino-acid chain: MGAILGKKIGMTRLYNDKREAISCTVIQAGPCFVTQVKSAEKDGYDAYQIGIGERDEKKINKPMQGHYRKAGVTPGFMMAEFKKTEFSENLEAGNPVSVESFKEGEKVNVLGVSKGKGFAGVVKRHNFGGGSRTHGQSDRLRAPGSVGGSSDPSRTFRGTRMAGRMGGDNITVKNLEIVKIMPESNLLVIKGAVPGPKNSYVKIVSIKK.

The tract at residues 126 to 165 is disordered; that stretch reads HNFGGGSRTHGQSDRLRAPGSVGGSSDPSRTFRGTRMAGR.

The protein belongs to the universal ribosomal protein uL3 family. In terms of assembly, part of the 50S ribosomal subunit. Forms a cluster with proteins L14 and L19.

Functionally, one of the primary rRNA binding proteins, it binds directly near the 3'-end of the 23S rRNA, where it nucleates assembly of the 50S subunit. This is Large ribosomal subunit protein uL3 from Chlorobium limicola (strain DSM 245 / NBRC 103803 / 6330).